The chain runs to 341 residues: Malate dehydrogenase, mitochondrial (341 aa).

The transit peptide at 1-22 (MFRSALVRSSASAKQSLLRRSF) directs the protein to the mitochondrion. NAD(+) is bound by residues 36 to 42 (GAAGGIG) and aspartate 62. Residues arginine 109 and arginine 115 each contribute to the substrate site. NAD(+) is bound by residues asparagine 122 and 145–147 (ISN). Substrate-binding residues include asparagine 147 and arginine 181. Methionine 256 is an NAD(+) binding site.

The protein belongs to the LDH/MDH superfamily. MDH type 1 family. Homodimer.

The protein localises to the mitochondrion matrix. It carries out the reaction (S)-malate + NAD(+) = oxaloacetate + NADH + H(+). The polypeptide is Malate dehydrogenase, mitochondrial (MDH) (Brassica napus (Rape)).